Consider the following 72-residue polypeptide: Large ribosomal subunit protein uL29 (72 aa).

Belongs to the universal ribosomal protein uL29 family.

In Prochlorococcus marinus (strain MIT 9215), this protein is Large ribosomal subunit protein uL29.